The primary structure comprises 165 residues: 3-isopropylmalate dehydratase small subunit (165 aa).

Belongs to the LeuD family. LeuD type 2 subfamily. Heterodimer of LeuC and LeuD.

The enzyme catalyses (2R,3S)-3-isopropylmalate = (2S)-2-isopropylmalate. Its pathway is amino-acid biosynthesis; L-leucine biosynthesis; L-leucine from 3-methyl-2-oxobutanoate: step 2/4. Functionally, catalyzes the isomerization between 2-isopropylmalate and 3-isopropylmalate, via the formation of 2-isopropylmaleate. The chain is 3-isopropylmalate dehydratase small subunit from Helicobacter hepaticus (strain ATCC 51449 / 3B1).